The sequence spans 316 residues: Probable 5-dehydro-4-deoxyglucarate dehydratase (316 aa).

Belongs to the DapA family.

It carries out the reaction 5-dehydro-4-deoxy-D-glucarate + H(+) = 2,5-dioxopentanoate + CO2 + H2O. Its pathway is carbohydrate acid metabolism; D-glucarate degradation; 2,5-dioxopentanoate from D-glucarate: step 2/2. The sequence is that of Probable 5-dehydro-4-deoxyglucarate dehydratase from Corynebacterium glutamicum (strain ATCC 13032 / DSM 20300 / JCM 1318 / BCRC 11384 / CCUG 27702 / LMG 3730 / NBRC 12168 / NCIMB 10025 / NRRL B-2784 / 534).